We begin with the raw amino-acid sequence, 484 residues long: HTH-type transcriptional regulator TauR (484 aa).

In terms of domain architecture, HTH gntR-type spans G16–A84. A DNA-binding region (H-T-H motif) is located at residues T44–A63. An N6-(pyridoxal phosphate)lysine modification is found at K330.

This sequence in the C-terminal section; belongs to the class-I pyridoxal-phosphate-dependent aminotransferase family. Requires pyridoxal 5'-phosphate as cofactor.

In terms of biological role, transcriptional activator, which is essential for taurine-dependent expression of the tpa-tauR-xsc operon. Acts by binding to direct repeats in the promoter region. This chain is HTH-type transcriptional regulator TauR, found in Rhodobacter capsulatus (strain ATCC BAA-309 / NBRC 16581 / SB1003).